The sequence spans 363 residues: Eukaryotic translation initiation factor 3 subunit H (363 aa).

Residues 13–163 (VQVEALVVMK…LRAFRLSTAF (151 aa)) form the MPN domain.

Belongs to the eIF-3 subunit H family. As to quaternary structure, component of the eukaryotic translation initiation factor 3 (eIF-3) complex.

Its subcellular location is the cytoplasm. Functionally, component of the eukaryotic translation initiation factor 3 (eIF-3) complex, which is involved in protein synthesis of a specialized repertoire of mRNAs and, together with other initiation factors, stimulates binding of mRNA and methionyl-tRNAi to the 40S ribosome. The eIF-3 complex specifically targets and initiates translation of a subset of mRNAs involved in cell proliferation. This is Eukaryotic translation initiation factor 3 subunit H from Pyricularia oryzae (strain 70-15 / ATCC MYA-4617 / FGSC 8958) (Rice blast fungus).